We begin with the raw amino-acid sequence, 4911 residues long: Histone-lysine N-methyltransferase 2C (4911 aa).

The segment at Met-1–Ser-101 is disordered. The segment covering Pro-12 to Ser-28 has biased composition (pro residues). Residues Ser-28 and Ser-46 each carry the phosphoserine modification. Residues Lys-34–Ser-46 constitute a DNA-binding region (a.T hook). Residues Arg-50–Gly-59 are compositionally biased toward basic residues. Over residues Glu-64–Val-81 the composition is skewed to acidic residues. Ser-89 carries the post-translational modification Phosphoserine. Positions Glu-92–Val-112 form a coiled coil. Ser-113 bears the Phosphoserine mark. Residues Arg-164 to Gln-203 are disordered. Residues Asn-176 to Pro-189 are compositionally biased toward polar residues. The residue at position 200 (Ser-200) is a Phosphoserine. Residues Glu-227 to Val-262 form a C2HC pre-PHD-type 1; degenerate zinc finger. 4 PHD-type zinc fingers span residues Glu-283 to Ile-331, Asp-341 to Cys-391, Cys-388 to Cys-438, and Asp-464 to Leu-520. The RING-type zinc finger occupies Cys-344 to Lys-389. The region spanning Arg-436–Lys-489 is the DHHC domain. Residues Glu-644–Glu-672 are a coiled coil. The span at Gln-721–Ser-730 shows a compositional bias: basic and acidic residues. A disordered region spans residues Gln-721 to Thr-742. The residue at position 758 (Lys-758) is an N6-acetyllysine. The span at Ser-763 to Leu-791 shows a compositional bias: low complexity. Disordered regions lie at residues Ser-763–His-798, Pro-828–Glu-864, and Gly-885–Leu-912. Residues Ile-830 to Ser-842 show a composition bias toward basic residues. A compositionally biased stretch (polar residues) spans Gly-845–Pro-856. Phosphoserine is present on Ser-854. 3 PHD-type zinc fingers span residues Gln-957–Cys-1010, Cys-1007–Cys-1057, and Leu-1084–Tyr-1139. Positions Ala-1215 to Glu-1324 are disordered. Over residues Gln-1224 to Val-1270 the composition is skewed to basic and acidic residues. A Phosphoserine modification is found at Ser-1301. A coiled-coil region spans residues Thr-1338–Ala-1366. Over residues Pro-1406 to Ser-1416 the composition is skewed to low complexity. Disordered regions lie at residues Pro-1406 to Leu-1431 and His-1458 to Glu-1485. A compositionally biased stretch (polar residues) spans Asp-1467 to Pro-1482. Lys-1508 is modified (N6-acetyllysine). Disordered regions lie at residues Phe-1604–Ser-1630 and Val-1709–Ala-2448. 2 stretches are compositionally biased toward polar residues: residues Asp-1610–Pro-1620 and Val-1709–Pro-1727. Positions Ser-1729–Phe-1753 are enriched in basic and acidic residues. Residues Arg-1754 to Gln-1787 are a coiled coil. Lys-1772 bears the N6-acetyllysine mark. Residues Phe-1788 to Gln-1823 show a composition bias toward polar residues. A compositionally biased stretch (pro residues) spans Gln-1851–Ser-1860. The span at Arg-1861–Gln-1875 shows a compositional bias: low complexity. Over residues Thr-1927 to Arg-1945 the composition is skewed to polar residues. At Ser-1987 the chain carries Phosphoserine. Lys-2009 carries the N6-acetyllysine modification. 4 stretches are compositionally biased toward polar residues: residues Gln-2054–Arg-2065, Phe-2085–Tyr-2094, Ala-2115–Tyr-2131, and Ser-2144–Tyr-2159. Residues Pro-2173–Thr-2187 are compositionally biased toward low complexity. Polar residues-rich tracts occupy residues Ser-2302–Ala-2319, Cys-2335–Ser-2353, and Ser-2362–Gln-2375. Positions Asp-2377–Glu-2389 are enriched in basic and acidic residues. The span at Ile-2390 to Lys-2399 shows a compositional bias: low complexity. An asymmetric dimethylarginine mark is found at Arg-2454 and Arg-2571. Disordered regions lie at residues Arg-2589 to Pro-2694, Glu-2793 to Ala-2887, Glu-2925 to Leu-2954, and Val-2989 to Gln-3029. Composition is skewed to polar residues over residues Pro-2629–Val-2645 and Pro-2661–Ser-2682. The segment covering Glu-2793–Ser-2811 has biased composition (basic and acidic residues). N6-acetyllysine is present on residues Lys-2802 and Lys-2809. Residues Lys-2814–Lys-2832 show a composition bias toward polar residues. Ser-2828 carries the post-translational modification Phosphoserine. Lys-2832 is subject to N6-acetyllysine. Basic and acidic residues predominate over residues Val-2833–Val-2849. Residues Thr-2851–Ser-2860 show a composition bias toward polar residues. A compositionally biased stretch (basic and acidic residues) spans Asp-2861–Arg-2884. At Lys-2867 the chain carries N6-acetyllysine. Low complexity predominate over residues Thr-3011–Gln-3029. 3 coiled-coil regions span residues Leu-3054–Glu-3081, Asn-3173–Gln-3272, and Phe-3391–Gln-3433. Over residues His-3205–Lys-3221 the composition is skewed to basic residues. Disordered stretches follow at residues His-3205 to Gln-3241, Pro-3353 to Glu-3409, Pro-3527 to Pro-3583, Ile-3596 to Gly-3919, and Val-4024 to Asn-4053. Basic and acidic residues-rich tracts occupy residues Ala-3222–Thr-3238 and Phe-3395–Glu-3409. Polar residues-rich tracts occupy residues Pro-3527–Val-3549, Ala-3564–Pro-3583, Ile-3637–Gln-3658, and Leu-3684–Asn-3701. Over residues Glu-3703 to Thr-3725 the composition is skewed to basic and acidic residues. N6-acetyllysine is present on Lys-3714. A Phosphoserine modification is found at Ser-3758. The span at Asp-3803–Glu-3812 shows a compositional bias: basic and acidic residues. Residues Met-3878–Asn-3892 are compositionally biased toward polar residues. The segment covering Pro-3897–Met-3911 has biased composition (pro residues). Ser-4034 is modified (phosphoserine). Position 4139 is an asymmetric dimethylarginine (Arg-4139). At Ser-4267 the chain carries Phosphoserine. The C2HC pre-PHD-type 2 zinc-finger motif lies at Tyr-4399–Val-4439. Residues Met-4460–Lys-4507 form a PHD-type 8 zinc finger. Positions Asp-4545 to Lys-4605 constitute an FYR N-terminal domain. In terms of domain architecture, FYR C-terminal spans Asp-4606 to Tyr-4691. The WDR5 interaction motif (WIN) signature appears at Gly-4707 to Glu-4712. Residues Ser-4771–Lys-4887 form the SET domain. S-adenosyl-L-methionine contacts are provided by residues Tyr-4825 and Asn-4848 to His-4849. 4 residues coordinate Zn(2+): Cys-4851, Cys-4899, Cys-4901, and Cys-4906. In terms of domain architecture, Post-SET spans His-4895–Asn-4911.

It belongs to the class V-like SAM-binding methyltransferase superfamily. Histone-lysine methyltransferase family. TRX/MLL subfamily. Component of the MLL3 complex (also named ASCOM complex), at least composed of catalytic subunit KMT2C/MLL3, ASH2L, RBBP5, WDR5, NCOA6, DPY30, KDM6A, PAXIP1/PTIP, PAGR1 and alpha- and beta-tubulin. Forms a core complex with the evolutionary conserved subcomplex WRAD composed of WDR5, RBBP5, ASH2L/ASH2 and DPY30 subunits; WRAD differentially stimulates the methyltransferase activity. Interacts (via WIN motif) with WDR5. As to expression, highly expressed in testis and ovary, followed by brain and liver. Also expressed in placenta, peripherical blood, fetal thymus, heart, lung and kidney. Within brain, expression was highest in hippocampus, caudate nucleus, and substantia nigra. Not detected in skeletal muscle and fetal liver.

It localises to the nucleus. It carries out the reaction L-lysyl(4)-[histone H3] + S-adenosyl-L-methionine = N(6)-methyl-L-lysyl(4)-[histone H3] + S-adenosyl-L-homocysteine + H(+). Histone methyltransferase that catalyzes methyl group transfer from S-adenosyl-L-methionine to the epsilon-amino group of 'Lys-4' of histone H3 (H3K4). Part of chromatin remodeling machinery predominantly forms H3K4me1 methylation marks at active chromatin sites where transcription and DNA repair take place. Likely plays a redundant role with KMT2D in enriching H3K4me1 mark on primed and active enhancer elements. The polypeptide is Histone-lysine N-methyltransferase 2C (KMT2C) (Homo sapiens (Human)).